The primary structure comprises 267 residues: Thiazole synthase (267 aa).

Lysine 101 acts as the Schiff-base intermediate with DXP in catalysis. 1-deoxy-D-xylulose 5-phosphate-binding positions include glycine 162, 188 to 189 (AG), and 210 to 211 (NT). Positions 247–267 (HASPSSPAAGVPCLPDPEVPV) are disordered.

It belongs to the ThiG family. As to quaternary structure, homotetramer. Forms heterodimers with either ThiH or ThiS.

The protein resides in the cytoplasm. It catalyses the reaction [ThiS sulfur-carrier protein]-C-terminal-Gly-aminoethanethioate + 2-iminoacetate + 1-deoxy-D-xylulose 5-phosphate = [ThiS sulfur-carrier protein]-C-terminal Gly-Gly + 2-[(2R,5Z)-2-carboxy-4-methylthiazol-5(2H)-ylidene]ethyl phosphate + 2 H2O + H(+). It functions in the pathway cofactor biosynthesis; thiamine diphosphate biosynthesis. Its function is as follows. Catalyzes the rearrangement of 1-deoxy-D-xylulose 5-phosphate (DXP) to produce the thiazole phosphate moiety of thiamine. Sulfur is provided by the thiocarboxylate moiety of the carrier protein ThiS. In vitro, sulfur can be provided by H(2)S. The chain is Thiazole synthase from Deinococcus geothermalis (strain DSM 11300 / CIP 105573 / AG-3a).